We begin with the raw amino-acid sequence, 1205 residues long: Plasma membrane calcium-transporting ATPase 1 (1205 aa).

The Cytoplasmic portion of the chain corresponds to 2–104 (GDMANNSVAY…KTFLQLVWEA (103 aa)). Positions 94–111 (PKTFLQLVWEALQDVTLI) are calmodulin-binding subdomain A. Residues 105-125 (LQDVTLIILEIAAVVSLGLSF) traverse the membrane as a helical segment. The Extracellular portion of the chain corresponds to 126–153 (YQPPGGNEALCGSVNVGEEEEESEAGWI). A helical membrane pass occupies residues 154–174 (EGAAILLSVVCVVLVTAFNDW). The Cytoplasmic segment spans residues 175 to 351 (SKEKQFRGLQ…KEKSVLQGKL (177 aa)). Positions 296-343 (EEEKEKEKKDKKTKAQDGAAMEMQPLKSEDGVDGDEKDKKRSNLPKKE) are disordered. 2 stretches are compositionally biased toward basic and acidic residues: residues 300–310 (EKEKKDKKTKA) and 322–343 (KSED…PKKE). A helical transmembrane segment spans residues 352–371 (TKLAVQIGKAGLLMSAITVI). The Extracellular segment spans residues 372 to 403 (ILVLYFVIDTSWVQKRPWLAECTPIYIQYFVK). Residues 404 to 424 (FFIIGVTVLVVAVPEGLPLAV) form a helical membrane-spanning segment. Residues 425–840 (TISLAYSVKK…RNVYDSISKF (416 aa)) are Cytoplasmic-facing. D460 (4-aspartylphosphate intermediate) is an active-site residue. D460, T462, and D782 together coordinate Mg(2+). The chain crosses the membrane as a helical span at residues 841-861 (LQFQLTVNVVAVIVAFTGACI). Topologically, residues 862-868 (TQDSPLK) are extracellular. The chain crosses the membrane as a helical span at residues 869–889 (AVQMLWVNLIMDTLASLALAT). Residues 890 to 912 (EPPTEALLLRKPYGRNKPLISRT) lie on the Cytoplasmic side of the membrane. A helical membrane pass occupies residues 913–933 (MMKNILGHAFYQLVVVFTLLF). Residues 934–956 (AGEKIFDIDSGRNAPLHAPPSEH) lie on the Extracellular side of the membrane. The chain crosses the membrane as a helical span at residues 957-976 (YTIVFNTFVMMQLFNEINAR). Residues 977–990 (KIHGERNVFEGIFN) lie on the Cytoplasmic side of the membrane. The chain crosses the membrane as a helical span at residues 991–1012 (NAIFCTIVLGTFVVQIIIVQFG). Residues 1013–1024 (GKPFSCSKLSIE) lie on the Extracellular side of the membrane. Residues 1025-1045 (QWLWSVFLGMGTLLWGQLIST) form a helical membrane-spanning segment. The Cytoplasmic portion of the chain corresponds to 1046 to 1205 (IPTSRLKFLK…SPLHSLETSL (160 aa)). The residue at position 1101 (T1101) is a Phosphothreonine; by PKC. Positions 1145 to 1205 (PLIDDTDAED…SPLHSLETSL (61 aa)) are disordered. A compositionally biased stretch (polar residues) spans 1183 to 1205 (TDMNKSATSSSPGSPLHSLETSL).

The protein belongs to the cation transport ATPase (P-type) (TC 3.A.3) family. Type IIB subfamily.

It is found in the cell membrane. It catalyses the reaction Ca(2+)(in) + ATP + H2O = Ca(2+)(out) + ADP + phosphate + H(+). Functionally, catalyzes the hydrolysis of ATP coupled with the transport of calcium from the cytoplasm to the extracellular space thereby maintaining intracellular calcium homeostasis. The polypeptide is Plasma membrane calcium-transporting ATPase 1 (Gallus gallus (Chicken)).